A 267-amino-acid polypeptide reads, in one-letter code: MSKSKAIENNGISNTNSPNGKYMAPRPEGVKPTCVVITYSVSKDIKAVREVLDERGASVHYIIDKDGTQKEYHNDLTDQAFYAGKSSWKGEVGVNKFGIGVMLINDAKSDFPAEQIGKLKEFLKDVTERYPNLDLKHDLVGLGEVTVNREGNAHIAPGSKFPWKELAEAGFGRYFETTQEQKSKLLLSLDSTGEKVNTLQENLKEYGYGVESTSTFDQFTQQAVRVFNDRYGTGLPNEEPPVSWTEAGQDVLSQLLGQTVLEQTENA.

The tract at residues 1 to 25 is disordered; that stretch reads MSKSKAIENNGISNTNSPNGKYMAP. Positions 10–19 are enriched in polar residues; that stretch reads NGISNTNSPN. One can recognise an N-acetylmuramoyl-L-alanine amidase domain in the interval 33–141; sequence TCVVITYSVS…NLDLKHDLVG (109 aa).

This sequence belongs to the N-acetylmuramoyl-L-alanine amidase 2 family.

It is found in the secreted. The catalysed reaction is Hydrolyzes the link between N-acetylmuramoyl residues and L-amino acid residues in certain cell-wall glycopeptides.. In Rickettsia conorii (strain ATCC VR-613 / Malish 7), this protein is Putative N-acetylmuramoyl-L-alanine amidase RC0497.